Reading from the N-terminus, the 283-residue chain is BTB/POZ domain-containing protein KCTD15 (283 aa).

The disordered stretch occupies residues 1–33 (MPHRKERPSGSSLNAHGSSGTAEGGNMSRLSLT). Polar residues predominate over residues 9-21 (SGSSLNAHGSSGT). Phosphoserine is present on residues S31, S35, and S38. The region spanning 56-126 (APVHIDVGGH…LRTSKLLLPD (71 aa)) is the BTB domain.

As to quaternary structure, forms oligomers, predominantly homopentamers. Interacts with KCTD1, probably forming heteropentamers depending on its abundance in a cell-type dependent manner. Interacts with TFAP2A; this interaction inhibits TFAP2A transcriptional activation. As to expression, expressed in the cerebral cortex, cerebellum, and hypothalamus (at protein level). Expressed in the arcuate hypothalamic nucleus, the ventromedial hypothalamic nucleus and the accumbens nucleus of the ventral striatum.

The protein localises to the nucleus. During embryonic development, interferes with neural crest formation. Inhibits AP2 transcriptional activity by interaction with its activation domain. This Mus musculus (Mouse) protein is BTB/POZ domain-containing protein KCTD15 (Kctd15).